A 336-amino-acid polypeptide reads, in one-letter code: Ferredoxin--NADP reductase (336 aa).

FAD contacts are provided by D37, Q45, Y50, V90, F124, D286, and T327.

Belongs to the ferredoxin--NADP reductase type 2 family. As to quaternary structure, homodimer. FAD serves as cofactor.

The enzyme catalyses 2 reduced [2Fe-2S]-[ferredoxin] + NADP(+) + H(+) = 2 oxidized [2Fe-2S]-[ferredoxin] + NADPH. The chain is Ferredoxin--NADP reductase from Enterococcus faecalis (strain ATCC 700802 / V583).